An 84-amino-acid chain; its full sequence is Large ribosomal subunit protein bL31 (84 aa).

Disordered regions lie at residues methionine 1–asparagine 41 and arginine 63–glutamate 84. Positions glutamate 21–threonine 30 are enriched in polar residues. Residues threonine 68–glutamate 84 show a composition bias toward acidic residues.

It belongs to the bacterial ribosomal protein bL31 family. Type A subfamily. In terms of assembly, part of the 50S ribosomal subunit.

Binds the 23S rRNA. The chain is Large ribosomal subunit protein bL31 from Salinibacter ruber (strain DSM 13855 / M31).